The sequence spans 307 residues: Fructose-bisphosphate aldolase (307 aa).

S49 is a D-glyceraldehyde 3-phosphate binding site. Catalysis depends on D82, which acts as the Proton donor. Zn(2+)-binding residues include H83, D104, E134, and H180. Dihydroxyacetone phosphate is bound at residue G181. H210 is a binding site for Zn(2+). Residues 211–213 and 253–256 each bind dihydroxyacetone phosphate; these read GAS and NTDT.

This sequence belongs to the class II fructose-bisphosphate aldolase family. As to quaternary structure, homodimer. It depends on Zn(2+) as a cofactor.

The enzyme catalyses beta-D-fructose 1,6-bisphosphate = D-glyceraldehyde 3-phosphate + dihydroxyacetone phosphate. It participates in carbohydrate degradation; glycolysis; D-glyceraldehyde 3-phosphate and glycerone phosphate from D-glucose: step 4/4. Catalyzes the aldol condensation of dihydroxyacetone phosphate (DHAP or glycerone-phosphate) with glyceraldehyde 3-phosphate (G3P) to form fructose 1,6-bisphosphate (FBP) in gluconeogenesis and the reverse reaction in glycolysis. In Helicobacter pylori (strain J99 / ATCC 700824) (Campylobacter pylori J99), this protein is Fructose-bisphosphate aldolase (fba).